The chain runs to 181 residues: Bifunctional protein PyrR (181 aa).

Substrate contacts are provided by residues 39-40 (RR), 104-112 (DDVLYTGRT), R137, and V161. The short motif at 100 to 112 (VILVDDVLYTGRT) is the PRPP-binding element.

It belongs to the purine/pyrimidine phosphoribosyltransferase family. PyrR subfamily.

It carries out the reaction UMP + diphosphate = 5-phospho-alpha-D-ribose 1-diphosphate + uracil. In terms of biological role, regulates the transcription of the pyrimidine nucleotide (pyr) operon in response to exogenous pyrimidines. Its function is as follows. Also displays a weak uracil phosphoribosyltransferase activity which is not physiologically significant. The chain is Bifunctional protein PyrR from Pasteurella multocida (strain Pm70).